Consider the following 173-residue polypeptide: MTRKSRRLILIAACGAVLALALGLILSAMSGSIVFFRSPAEVAAQGVAPGTRFRLGGLVKDGSVKRGPDQNVEFAVTDTNATVPVQYRGLLPDLFREGQGIVAEGTLDVGGVFRADTVLAKHDENYMPREVADALKAQGRWQEGGGKDASKAAPKDAAKPETADATLGQRSER.

Topologically, residues 1-7 (MTRKSRR) are cytoplasmic. Residues 8–28 (LILIAACGAVLALALGLILSA) traverse the membrane as a helical; Signal-anchor for type II membrane protein segment. Over 29-173 (MSGSIVFFRS…DATLGQRSER (145 aa)) the chain is Periplasmic. Heme is bound by residues H122 and Y126. The tract at residues 134–173 (ALKAQGRWQEGGGKDASKAAPKDAAKPETADATLGQRSER) is disordered. Positions 145–162 (GGKDASKAAPKDAAKPET) are enriched in basic and acidic residues.

The protein belongs to the CcmE/CycJ family.

It localises to the cell inner membrane. Its function is as follows. Heme chaperone required for the biogenesis of c-type cytochromes. Transiently binds heme delivered by CcmC and transfers the heme to apo-cytochromes in a process facilitated by CcmF and CcmH. The protein is Cytochrome c-type biogenesis protein CcmE of Methylorubrum extorquens (strain CM4 / NCIMB 13688) (Methylobacterium extorquens).